We begin with the raw amino-acid sequence, 190 residues long: COMM domain-containing protein 1 (190 aa).

The residue at position 2 (Ala-2) is an N-acetylalanine. Residues Ala-2–Ser-123 form a sufficient for interaction with SLC12A2 region. Positions 101, 110, and 134 each coordinate Cu cation. In terms of domain architecture, COMM spans Gly-118–Ile-186. The interval Arg-125–Asn-190 is required for binding to PtdIns(4,5)P2.

The protein belongs to the COMM domain-containing protein 1 family. As to quaternary structure, component of the commander complex consisting of the CCC subcomplex and the retriever subcomplex. Component of the CCC (COMMD/CCDC22/CCDC93) subcomplex consisting of COMMD1, COMMD2, COMMD3, COMMD4, COMMD5, COMMD6, COMMD7, COMMD8, COMMD9, COMMD10, CCDC22 and CCDC93; within the complex forms a heterodimer with COMMD6. Interacts with VPS35L; the interaction associates the CCC complex with the retriever complex. Identified in a complex with an E3 ubiquitin ligase complex composed of TCEB1/elongin C, CUL2, SOCS1 and RBX1; in the complex interacts directly with SOCS1 and CUL2. Identified in a complex with NF-kappa-B. Interacts directly with SLC12A2. Interacts directly with ATP7B (via the N-terminal region). Interacts with ATP7A. Interacts with FAM107A; this interaction stabilizes COMMD1 in the nucleus. Interacts with CCS, CDKN2A, RELA, REL, RELB, NFKB1/p105, NFKB2/p100, NFKBIB, SCNN1D, SCNN1B, CFTR, CLU, SGK1, AKT1, CUL1, CUL2, CUL3, CUL4A, CUL4B, CUL5, CUL7, HIF1A. Acetylated by EP300 ina stimuli-specific manner; protecting it from XIAP-mediated proteasomal degradation and required for interaction with RElA in response to stress. In terms of processing, ubiquitinated; undergoes both 'Lys-63'- and 'Lys-48'-linked polyubiquitination. Ubiquitinated by XIAP, leading to its proteasomal degradation. As to expression, ubiquitous. Highest expression in the liver, with lower expression in brain, lung, placenta, pancreas, small intestine, heart, skeletal muscle, kidney and placenta. Down-regulated in cancer tissues.

The protein localises to the nucleus. The protein resides in the cytoplasm. It localises to the endosome membrane. It is found in the cytoplasmic vesicle. Its subcellular location is the early endosome. The protein localises to the recycling endosome. Functionally, scaffold protein in the commander complex that is essential for endosomal recycling of transmembrane cargos; the commander complex is composed of the CCC subcomplex and the retriever subcomplex. Can modulate activity of cullin-RING E3 ubiquitin ligase (CRL) complexes by displacing CAND1; in vitro promotes CRL E3 activity and dissociates CAND1 from CUL1 and CUL2. Promotes ubiquitination of NF-kappa-B subunit RELA and its subsequent proteasomal degradation. Down-regulates NF-kappa-B activity. Involved in the regulation of membrane expression and ubiquitination of SLC12A2. Modulates Na(+) transport in epithelial cells by regulation of apical cell surface expression of amiloride-sensitive sodium channel (ENaC) subunits and by promoting their ubiquitination presumably involving NEDD4L. Promotes the localization of SCNN1D to recycling endosomes. Promotes CFTR cell surface expression through regulation of its ubiquitination. Down-regulates SOD1 activity by interfering with its homodimerization. Plays a role in copper ion homeostasis. Involved in copper-dependent ATP7A trafficking between the trans-Golgi network and vesicles in the cell periphery; the function is proposed to depend on its association within the CCC complex and cooperation with the WASH complex on early endosomes. Can bind one copper ion per monomer. May function to facilitate biliary copper excretion within hepatocytes. Binds to phosphatidylinositol 4,5-bisphosphate (PtdIns(4,5)P2). Involved in the regulation of HIF1A-mediated transcription; competes with ARNT/Hif-1-beta for binding to HIF1A resulting in decreased DNA binding and impaired transcriptional activation by HIF-1. Negatively regulates neuroblastoma G1/S phase cell cycle progression and cell proliferation by stimulating ubiquitination of NF-kappa-B subunit RELA and NF-kappa-B degradation in a FAM107A- and actin-dependent manner. In Homo sapiens (Human), this protein is COMM domain-containing protein 1 (COMMD1).